We begin with the raw amino-acid sequence, 336 residues long: Probable aquaglyceroporin-2 (336 aa).

The interval 1-46 (MPISTINDSISESSVHKSSIPTKVEMSQNEKYSEAPSEAPTIPPPP) is disordered. Residues 1-64 (MPISTINDSI…RENCQDAFSE (64 aa)) lie on the Cytoplasmic side of the membrane. Positions 9-19 (SISESSVHKSS) are enriched in low complexity. Residues 65–85 (FFGTFVLLLFGDGVVAQVVLS) traverse the membrane as a helical segment. Residues 86 to 94 (RGTKGDYQS) are Extracellular-facing. The helical transmembrane segment at 95 to 115 (ISWGWGLGVMLGVYVGGKSGG) threads the bilayer. At 116-135 (HLNPAVTLANCLFRGHPWRK) the chain is on the cytoplasmic side. The NPA 1 signature appears at 118 to 120 (NPA). The helical transmembrane segment at 136–156 (FPIYAVAQVLGAMAAAAVVYG) threads the bilayer. The Extracellular segment spans residues 157-195 (NYKSAIDAYEGGPGIRTVIGENATAGVFCTYPAEFMTRT). Asn-178 is a glycosylation site (N-linked (GlcNAc...) asparagine). A helical transmembrane segment spans residues 196–216 (GMFFSEFIASTILQFVIFAMA). The Cytoplasmic segment spans residues 217 to 223 (DSANIGA). Residues 224-244 (GPLMPLGLFFLIFGIGACFGW) traverse the membrane as a helical segment. Residues 245-280 (ETGYAINLARDFGPRLVSYMLGYGSEVWSAGGYYFW) are Extracellular-facing. An NPA 2 motif is present at residues 251–253 (NLA). A helical membrane pass occupies residues 281–301 (IPMVAPFFGCAFGGFLYDVFI). The Cytoplasmic segment spans residues 302–336 (YTGPSPINTPGMGFGRLVSPRRSTWSNTYNANSPV).

This sequence belongs to the MIP/aquaporin (TC 1.A.8) family.

It is found in the membrane. It catalyses the reaction H2O(in) = H2O(out). The enzyme catalyses glycerol(in) = glycerol(out). Probable water/glycerol channel that may have redundant functions with FgAQP4. This Gibberella zeae (strain ATCC MYA-4620 / CBS 123657 / FGSC 9075 / NRRL 31084 / PH-1) (Wheat head blight fungus) protein is Probable aquaglyceroporin-2.